A 132-amino-acid chain; its full sequence is Mite allergen Der p 5 (132 aa).

2 immunodominant conformational IgE-binding epitope regions span residues 25-53 (DYQN…FYLQ) and 102-132 (EQYN…KIEV).

It belongs to the mite group 5 allergen family. Monomer. Trimer of homodimers. Oligomerizes in a concentration-dependent manner.

In Dermatophagoides pteronyssinus (European house dust mite), this protein is Mite allergen Der p 5 (DERP5).